The following is a 224-amino-acid chain: UPF0758 protein BLi02933/BL00636 (224 aa).

Residues 102–224 (VIRFPEDAAN…FVSLKEKGYL (123 aa)) form the MPN domain. Zn(2+) is bound by residues histidine 173, histidine 175, and aspartate 186. A JAMM motif motif is present at residues 173–186 (HNHPSGDPAPSRED).

The protein belongs to the UPF0758 family.

In Bacillus licheniformis (strain ATCC 14580 / DSM 13 / JCM 2505 / CCUG 7422 / NBRC 12200 / NCIMB 9375 / NCTC 10341 / NRRL NRS-1264 / Gibson 46), this protein is UPF0758 protein BLi02933/BL00636.